The following is a 213-amino-acid chain: Embryo-specific protein ATS3 (213 aa).

An N-terminal signal peptide occupies residues 1–21 (MTFPSLSVSFLFFAFIFVTHA). Positions 34-148 (CPYTVVVMTS…LNTWYGHNNC (115 aa)) constitute a PLAT domain. Residues 147–188 (NCNTTGRPSSPDLPPPHFPPEFPPETPTTPPPPPPRPSAASR) are disordered. N149 carries N-linked (GlcNAc...) asparagine glycosylation. Over residues 157 to 183 (PDLPPPHFPPEFPPETPTTPPPPPPRP) the composition is skewed to pro residues.

In terms of tissue distribution, expressed in seeds. Expression is restricted to the developing embryo.

It is found in the secreted. May play a role during embryo development. The protein is Embryo-specific protein ATS3 of Arabidopsis thaliana (Mouse-ear cress).